We begin with the raw amino-acid sequence, 248 residues long: 3,4-dihydroxyphthalate decarboxylase (248 aa).

Glu90 acts as the Proton donor/acceptor in catalysis. Positions 90, 109, 111, and 177 each coordinate a divalent metal cation.

It belongs to the aldolase class II family. A divalent metal cation is required as a cofactor.

The catalysed reaction is 3,4-dihydroxyphthalate + H(+) = 3,4-dihydroxybenzoate + CO2. The protein operates within xenobiotic degradation; phthalate degradation. Functionally, catalyzes the decarboxylation of 3,4-dihydroxyphthalate to protocatechuate (3,4-dihydroxybenzoate) during phthalate metabolism. The chain is 3,4-dihydroxyphthalate decarboxylase from Arthrobacter keyseri.